Reading from the N-terminus, the 310-residue chain is Putative HTH-type transcriptional regulatory protein YN1551_1579 (310 aa).

An HTH cro/C1-type domain is found at leucine 125–valine 180. The segment at residues isoleucine 136–lysine 155 is a DNA-binding region (H-T-H motif).

The sequence is that of Putative HTH-type transcriptional regulatory protein YN1551_1579 from Saccharolobus islandicus (strain Y.N.15.51 / Yellowstone #2) (Sulfolobus islandicus).